Consider the following 222-residue polypeptide: UPF0502 protein SO_1867 (222 aa).

Polar residues predominate over residues 169–193 (EQVSATSLSADSPSADSNSLNAQDR). A disordered region spans residues 169–195 (EQVSATSLSADSPSADSNSLNAQDRQQ).

The protein belongs to the UPF0502 family.

This chain is UPF0502 protein SO_1867, found in Shewanella oneidensis (strain ATCC 700550 / JCM 31522 / CIP 106686 / LMG 19005 / NCIMB 14063 / MR-1).